Reading from the N-terminus, the 30-residue chain is Hementerin (30 aa).

Ca(2+) serves as cofactor.

The protein localises to the secreted. With respect to regulation, fibrino(geno)lytic activity inhibited by EDTA but not by PMSF, E-64, 6-AHA and aprotinin. Functionally, cleaves fibrinogen Aalpha (FGA), gamma (FGG) and Bbeta (FGB) chains. Degrades cross-linked fibrin. Has no amidolytic, plasminogenolytic or caseinolytic activity. Inhibits platelet aggregation induced by collagen (IC(50)=7.5ug/ml) and various other agonists, presumably via activation of a nitridergic pathway. Inhibition is accompanied by reduced ATP release from and surface expression of SELP and CD63 on platelets as well as increased intracellular levels of Ca(2+), cGMP and nitric oxide synthase activity. The polypeptide is Hementerin (Haementeria depressa (Leech)).